A 240-amino-acid chain; its full sequence is Probable septum site-determining protein MinC (240 aa).

The protein belongs to the MinC family. Interacts with MinD and FtsZ.

Cell division inhibitor that blocks the formation of polar Z ring septums. Rapidly oscillates between the poles of the cell to destabilize FtsZ filaments that have formed before they mature into polar Z rings. Prevents FtsZ polymerization. The protein is Probable septum site-determining protein MinC of Acinetobacter baumannii (strain AYE).